A 247-amino-acid chain; its full sequence is Chaperone protein NfaE (247 aa).

The N-terminal stretch at 1-29 is a signal peptide; the sequence is MKMRAVAVFTGMLTGVLSVTGLLSAGAYA. The interval 106-125 is disordered; it reads GQQSSRRRSVSTGGEFPSDR.

It belongs to the periplasmic pilus chaperone family.

It is found in the periplasm. In terms of biological role, involved in the biogenesis of the NFA-I adhesin. This chain is Chaperone protein NfaE (nfaE), found in Escherichia coli.